The following is a 205-amino-acid chain: Imidazole glycerol phosphate synthase subunit HisH (205 aa).

The Glutamine amidotransferase type-1 domain occupies 1-205; it reads MVGIVNYNIG…RILKNFCEIG (205 aa). C79 (nucleophile) is an active-site residue. Active-site residues include H186 and E188.

Heterodimer of HisH and HisF.

It is found in the cytoplasm. It carries out the reaction 5-[(5-phospho-1-deoxy-D-ribulos-1-ylimino)methylamino]-1-(5-phospho-beta-D-ribosyl)imidazole-4-carboxamide + L-glutamine = D-erythro-1-(imidazol-4-yl)glycerol 3-phosphate + 5-amino-1-(5-phospho-beta-D-ribosyl)imidazole-4-carboxamide + L-glutamate + H(+). The enzyme catalyses L-glutamine + H2O = L-glutamate + NH4(+). Its pathway is amino-acid biosynthesis; L-histidine biosynthesis; L-histidine from 5-phospho-alpha-D-ribose 1-diphosphate: step 5/9. IGPS catalyzes the conversion of PRFAR and glutamine to IGP, AICAR and glutamate. The HisH subunit catalyzes the hydrolysis of glutamine to glutamate and ammonia as part of the synthesis of IGP and AICAR. The resulting ammonia molecule is channeled to the active site of HisF. This Wolinella succinogenes (strain ATCC 29543 / DSM 1740 / CCUG 13145 / JCM 31913 / LMG 7466 / NCTC 11488 / FDC 602W) (Vibrio succinogenes) protein is Imidazole glycerol phosphate synthase subunit HisH.